A 459-amino-acid polypeptide reads, in one-letter code: Chromosomal replication initiator protein DnaA (459 aa).

The tract at residues 1–74 (MMEMPIDNLW…ANVVQSILGH (74 aa)) is domain I, interacts with DnaA modulators. The domain II stretch occupies residues 74–117 (HPVEIYITVAKGEEFEEIGGGGEWELPTTNIINETPNQNRQPNT). The tract at residues 118-334 (ELNAKYVFSR…GALTRALAYI (217 aa)) is domain III, AAA+ region. ATP contacts are provided by Gly162, Gly164, Lys165, and Thr166. Positions 335–459 (SIWGLPMTVA…IKMNSRSRKP (125 aa)) are domain IV, binds dsDNA.

It belongs to the DnaA family. As to quaternary structure, oligomerizes as a right-handed, spiral filament on DNA at oriC.

The protein localises to the cytoplasm. Functionally, plays an essential role in the initiation and regulation of chromosomal replication. ATP-DnaA binds to the origin of replication (oriC) to initiate formation of the DNA replication initiation complex once per cell cycle. Binds the DnaA box (a 9 base pair repeat at the origin) and separates the double-stranded (ds)DNA. Forms a right-handed helical filament on oriC DNA; dsDNA binds to the exterior of the filament while single-stranded (ss)DNA is stabiized in the filament's interior. The ATP-DnaA-oriC complex binds and stabilizes one strand of the AT-rich DNA unwinding element (DUE), permitting loading of DNA polymerase. After initiation quickly degrades to an ADP-DnaA complex that is not apt for DNA replication. Binds acidic phospholipids. The sequence is that of Chromosomal replication initiator protein DnaA from Nostoc sp. (strain PCC 7120 / SAG 25.82 / UTEX 2576).